Reading from the N-terminus, the 213-residue chain is MGSTHSAEKVKSVEDSTSPANPGIFCTPLPGFISNIQRLVLRKLSISARKQKRLNKRSKHLLRPMPRCSSFGSCGTLLTPTKKSASNIADRRYAQWKCSFEHLAQKQPRLHDISEAMTGQTTPRGFPSHTDPKRCLMVMDSSSPESPLYDMVGGQKVRRRLSLRSHALVRRPSARQKAEQAKLDAQFQRDLRDLEDYYGGFHFAQRRERLVKV.

As to expression, blastoderm. Throughout the entire cortex of the embryo although the distribution is not uniform.

Functionally, actin-myosin network stability during cellularization. Might be involved in increasing actin-actin interactions or membrane-to-cytoskeleton attachments. nullo together with Sry-a and bnk may provide auxiliary functions, by acting both to stabilize a large and dynamic microfilament structure and regulate its functions. The polypeptide is Protein nullo (nullo) (Drosophila melanogaster (Fruit fly)).